Here is a 58-residue protein sequence, read N- to C-terminus: Large ribosomal subunit protein bL32 (58 aa).

Over residues 1–15 the composition is skewed to basic residues; that stretch reads MAVPKKKTSKAKRNQ. The disordered stretch occupies residues 1–23; it reads MAVPKKKTSKAKRNQRSATWKGK.

It belongs to the bacterial ribosomal protein bL32 family.

This is Large ribosomal subunit protein bL32 from Parasynechococcus marenigrum (strain WH8102).